We begin with the raw amino-acid sequence, 409 residues long: N-acetylglucosamine-6-phosphate deacetylase (409 aa).

An a divalent metal cation-binding site is contributed by E143. Substrate is bound at residue 154 to 155 (AH). Residues H211 and H232 each contribute to the a divalent metal cation site. Substrate contacts are provided by residues 235–236 (NA), R243, and 269–272 (DGIH). D294 functions as the Proton donor/acceptor in the catalytic mechanism. Residue 328–330 (LGG) coordinates substrate.

It belongs to the metallo-dependent hydrolases superfamily. NagA family. Requires a divalent metal cation as cofactor.

The catalysed reaction is N-acetyl-D-glucosamine 6-phosphate + H2O = D-glucosamine 6-phosphate + acetate. It functions in the pathway amino-sugar metabolism; N-acetylneuraminate degradation. In terms of biological role, hydrolyzes the N-glycolyl group from N-glycolylglucosamine 6-phosphate (GlcNGc-6-P) in the N-glycolylneuraminic acid (Neu5Gc) degradation pathway. The protein is N-acetylglucosamine-6-phosphate deacetylase (Amdhd2) of Mus musculus (Mouse).